The primary structure comprises 263 residues: Small ribosomal subunit protein uS3 (263 aa).

The region spanning Ile-40 to Glu-108 is the KH type-2 domain. The tract at residues Lys-224–Glu-263 is disordered. The span at Lys-239–Asn-248 shows a compositional bias: basic and acidic residues. Over residues Lys-249–Glu-263 the composition is skewed to low complexity.

Belongs to the universal ribosomal protein uS3 family. As to quaternary structure, part of the 30S ribosomal subunit. Forms a tight complex with proteins S10 and S14.

Functionally, binds the lower part of the 30S subunit head. Binds mRNA in the 70S ribosome, positioning it for translation. The protein is Small ribosomal subunit protein uS3 of Mycoplasmoides gallisepticum (strain R(low / passage 15 / clone 2)) (Mycoplasma gallisepticum).